The primary structure comprises 56 residues: Botcinic acid biosynthesis cluster B protein 14 (56 aa).

It functions in the pathway polyketide biosynthesis. In terms of biological role, part of the gene cluster B that mediates the biosynthesis of botcinic acid and its botcinin derivatives, acetate-derived polyketides that contribute to virulence when combined with the sesquiterpene botrydial. Botcinic acid and its derivatives have been shown to induce chlorosis and necrosis during host plant infection, but also have antifungal activities. Two polyketide synthases, BOA6 and BOA9, are involved in the biosynthesis of botcinins. BOA6 mediates the formation of the per-methylated tetraketide core by condensation of four units of malonyl-CoA with one unit of acetyl-CoA, which would be methylated in activated methylene groups to yield a bicyclic acid intermediate that could then either be converted to botrylactone derivatives or lose the starter acetate unit through a retro-Claisen type C-C bond cleavage to yield botcinin derivatives. The second polyketide synthase, BOA9, is probably required for the biosynthesis of the tetraketide side chain of botcinins. The methyltransferase (MT) domain within BOA6 is probably responsible for the incorporation of four methyl groups. The trans-enoyl reductase BOA5 might take over the enoyl reductase function of BOA6 that misses an ER domain. The monooxygenases BOA2, BOA3 and BOA4 might be involved in further hydroxylations at C4, C5 and C8, whereas BOA7, close to BOA9, could potentially be involved in the hydroxylation at C4 in the side chain of botcinins. In Botryotinia fuckeliana (strain B05.10) (Noble rot fungus), this protein is Botcinic acid biosynthesis cluster B protein 14.